A 415-amino-acid chain; its full sequence is Dynein assembly factor with WD repeat domains 1 (415 aa).

8 WD repeats span residues 90 to 129, 132 to 174, 175 to 214, 217 to 256, 259 to 298, 301 to 340, 343 to 384, and 386 to 415; these read AHIL…ELHT, GHRN…HTFR, GHTA…EALT, GHAA…RIHT, GHRG…CVAT, GHDD…CLAK, GHEG…QVLK, and HTDE…RIWR.

Belongs to the WD repeat WDR69 family.

The protein resides in the cytoplasm. It localises to the cytoskeleton. Its subcellular location is the flagellum basal body. The protein localises to the flagellum axoneme. Required for axonemal dynein assembly and ciliary motility in ciliated organs, including Kupffer's vesicle, during embryogenesis. Facilitates the onset of robust cilia motility during development. The polypeptide is Dynein assembly factor with WD repeat domains 1 (daw1) (Xenopus laevis (African clawed frog)).